Consider the following 141-residue polypeptide: Nucleoside diphosphate kinase (141 aa).

ATP is bound by residues Lys-11, Phe-59, Arg-87, Thr-93, Arg-104, and Asn-114. Residue His-117 is the Pros-phosphohistidine intermediate of the active site.

This sequence belongs to the NDK family. Homotetramer. Mg(2+) is required as a cofactor.

The protein resides in the cytoplasm. The catalysed reaction is a 2'-deoxyribonucleoside 5'-diphosphate + ATP = a 2'-deoxyribonucleoside 5'-triphosphate + ADP. It carries out the reaction a ribonucleoside 5'-diphosphate + ATP = a ribonucleoside 5'-triphosphate + ADP. Its function is as follows. Major role in the synthesis of nucleoside triphosphates other than ATP. The ATP gamma phosphate is transferred to the NDP beta phosphate via a ping-pong mechanism, using a phosphorylated active-site intermediate. This is Nucleoside diphosphate kinase from Vibrio parahaemolyticus serotype O3:K6 (strain RIMD 2210633).